A 258-amino-acid chain; its full sequence is Sugar fermentation stimulation protein homolog (258 aa).

Belongs to the SfsA family.

The sequence is that of Sugar fermentation stimulation protein homolog from Prochlorococcus marinus (strain NATL2A).